We begin with the raw amino-acid sequence, 285 residues long: uncharacterized protein (285 aa).

This is an uncharacterized protein from Mycoplasma pneumoniae (strain ATCC 29342 / M129 / Subtype 1) (Mycoplasmoides pneumoniae).